The primary structure comprises 180 residues: MQEKAVVLDDQMIRRALTRISHEIVERNKGVDNCVLVGIKTRGIFIAQRLAERIGQIEGKEMEVGELDITLYRDDLTLQSKNKEPLVKGSDIPVDITKKKVILVDDVLYTGRTVRAAMDALMDLGRPSQIQLAVLVDRGHRELPIRADYVGKNIPTSSEERIEVDLQETDQQDRVSIYDK.

Positions 101-113 (VILVDDVLYTGRT) match the PRPP-binding motif.

It belongs to the purine/pyrimidine phosphoribosyltransferase family. PyrR subfamily. Homodimer and homohexamer; in equilibrium.

The catalysed reaction is UMP + diphosphate = 5-phospho-alpha-D-ribose 1-diphosphate + uracil. In terms of biological role, regulates transcriptional attenuation of the pyrimidine nucleotide (pyr) operon by binding in a uridine-dependent manner to specific sites on pyr mRNA. This disrupts an antiterminator hairpin in the RNA and favors formation of a downstream transcription terminator, leading to a reduced expression of downstream genes. Also displays a weak uracil phosphoribosyltransferase activity which is not physiologically significant. This is Bifunctional protein PyrR from Bacillus cereus (strain ATCC 14579 / DSM 31 / CCUG 7414 / JCM 2152 / NBRC 15305 / NCIMB 9373 / NCTC 2599 / NRRL B-3711).